We begin with the raw amino-acid sequence, 118 residues long: Large ribosomal subunit protein uL18 (118 aa).

Positions 1–24 (MISKPDKNKIRQKRHRRVRGKLSG) are disordered. Residues 10-20 (IRQKRHRRVRG) show a composition bias toward basic residues.

Belongs to the universal ribosomal protein uL18 family. As to quaternary structure, part of the 50S ribosomal subunit; part of the 5S rRNA/L5/L18/L25 subcomplex. Contacts the 5S and 23S rRNAs.

Functionally, this is one of the proteins that bind and probably mediate the attachment of the 5S RNA into the large ribosomal subunit, where it forms part of the central protuberance. This is Large ribosomal subunit protein uL18 from Streptococcus mutans serotype c (strain ATCC 700610 / UA159).